We begin with the raw amino-acid sequence, 126 residues long: Adenosine 5'-monophosphoramidase HINT1 (126 aa).

Residue Ala-2 is modified to N-acetylalanine. The HIT domain occupies 18-126; the sequence is IFGKIIRKEI…GGRQMNWPPG (109 aa). N6-acetyllysine occurs at positions 21 and 30. 43 to 44 serves as a coordination point for AMP; sequence DI. 2 positions are modified to phosphoserine: Ser-45 and Ser-72. AMP-binding positions include Asn-99, 105–107, and 112–114; these read GQS and HLH. Residues 110–114 carry the Histidine triad motif motif; sequence HVHLH. His-112 (tele-AMP-histidine intermediate) is an active-site residue.

The protein belongs to the HINT family. In terms of assembly, homodimer. Interacts with CDK7. Interacts with RUVBL1 and RUVBL2 and is associated with the LEF1/TCF1-CTNNB1 complex and with a KAT5 histone acetyltransferase complex. Identified in a complex with MITF and CTNNB1. Interacts with CDC34 and RBX1, and is part of a SCF (SKP2-CUL1-F-box protein) E3 ubiquitin-protein ligase complex. Interacts with SUMO1, SUMO2 and RGS17. Interacts with the Ten-1 ICD form of TENM1. Interacts with CALM1; interaction increases in the presence of calcium ions. In terms of tissue distribution, widely expressed.

It is found in the cytoplasm. Its subcellular location is the nucleus. It carries out the reaction adenosine 5'-phosphoramidate + H2O = AMP + NH4(+). Exhibits adenosine 5'-monophosphoramidase activity, hydrolyzing purine nucleotide phosphoramidates with a single phosphate group such as adenosine 5'monophosphoramidate (AMP-NH2) to yield AMP and NH2. Hydrolyzes adenosine 5'monophosphomorpholidate (AMP-morpholidate) and guanosine 5'monophosphomorpholidate (GMP-morpholidate). Hydrolyzes lysyl-AMP (AMP-N-epsilon-(N-alpha-acetyl lysine methyl ester)) generated by lysine tRNA ligase. Hydrolyzes Met-AMP, His-AMP, Asp-AMP, lysyl-GMP (GMP-N-epsilon-(N-alpha-acetyl lysine methyl ester)) and AMP-N-alanine methyl ester. Can also convert adenosine 5'-O-phosphorothioate and guanosine 5'-O-phosphorothioate to the corresponding nucleoside 5'-O-phosphates with concomitant release of hydrogen sulfide. In addition, functions as a scaffolding protein that modulates transcriptional activation by the LEF1/TCF1-CTNNB1 complex and by the complex formed with MITF and CTNNB1. Modulates p53/TP53 levels and p53/TP53-mediated apoptosis. Modulates proteasomal degradation of target proteins by the SCF (SKP2-CUL1-F-box protein) E3 ubiquitin-protein ligase complex. Also exhibits SUMO-specific isopeptidase activity, deconjugating SUMO1 from RANGAP1 and RGS17. In Oryctolagus cuniculus (Rabbit), this protein is Adenosine 5'-monophosphoramidase HINT1 (HINT1).